The chain runs to 75 residues: uncharacterized protein (75 aa).

The helical transmembrane segment at 4 to 26 (PSLLFLGFSGVLAFGEVGWVGVY) threads the bilayer.

It localises to the membrane. This is an uncharacterized protein from Treponema pallidum (strain Nichols).